The primary structure comprises 555 residues: MRSDQIKKGLKQAPARAMLRAVGVGDEDFGRPFVGVVNTFTDGMPCNFHLRELAQHLKAGLKEAGLFPFEFGAPAISDGISMGTPGMRASLVSREVIADSVELIAQGYLYDGMVGLSACDKTIPGTAMGVIRSGVPGMILYGGTIAPGEWQGRKLTIVEVFEAVGQRAAGKISEEELLEIERRAIPGPGACGGQYTANTMAMALEALGLSPVGYNAIPAVHPEKERATKEAGKILAWAIAHDWKPKDFLTRKSFLNAIAAVAATGGSTNAVLHLLALAKEAGVELSLDDFDQISRKTPVIADLRPWGTYTAWELYEAGGTALVFKRLLEAGLLFGEEKTLTGRTLAEEVERAYREQEGQKVVFPVEKALKPHGGLVVLKGNLAPKGAVLKLAGTERTYFEGPARVFDSEEAAMEKVLKGEIRPGDVVVIRYVGPKGAPGMPEMLSVTSAIVGEGLGPEVALLTDGRFSGGTRGLMIGHIAPEAFVGGPIALLEEGDRIRIDVEGRRLEVLLPEEELERRRARWRPRPPAFTHGLFARYAALVRQADEGAVLEDPL.

[2Fe-2S] cluster is bound at residue Cys46. A Mg(2+)-binding site is contributed by Asp78. Residue Cys119 participates in [2Fe-2S] cluster binding. Positions 120 and 121 each coordinate Mg(2+). The residue at position 121 (Lys121) is an N6-carboxylysine. Residue Cys191 coordinates [2Fe-2S] cluster. Glu442 serves as a coordination point for Mg(2+). Ser468 (proton acceptor) is an active-site residue.

It belongs to the IlvD/Edd family. As to quaternary structure, homodimer. The cofactor is [2Fe-2S] cluster. It depends on Mg(2+) as a cofactor.

It carries out the reaction (2R)-2,3-dihydroxy-3-methylbutanoate = 3-methyl-2-oxobutanoate + H2O. The catalysed reaction is (2R,3R)-2,3-dihydroxy-3-methylpentanoate = (S)-3-methyl-2-oxopentanoate + H2O. It participates in amino-acid biosynthesis; L-isoleucine biosynthesis; L-isoleucine from 2-oxobutanoate: step 3/4. It functions in the pathway amino-acid biosynthesis; L-valine biosynthesis; L-valine from pyruvate: step 3/4. In terms of biological role, functions in the biosynthesis of branched-chain amino acids. Catalyzes the dehydration of (2R,3R)-2,3-dihydroxy-3-methylpentanoate (2,3-dihydroxy-3-methylvalerate) into 2-oxo-3-methylpentanoate (2-oxo-3-methylvalerate) and of (2R)-2,3-dihydroxy-3-methylbutanoate (2,3-dihydroxyisovalerate) into 2-oxo-3-methylbutanoate (2-oxoisovalerate), the penultimate precursor to L-isoleucine and L-valine, respectively. In Thermus thermophilus (strain ATCC 27634 / DSM 579 / HB8), this protein is Dihydroxy-acid dehydratase.